Here is a 141-residue protein sequence, read N- to C-terminus: Alpha-lactalbumin (141 aa).

The N-terminal stretch at 1–19 is a signal peptide; the sequence is MMSFVSLLVVGILFPAIQA. The C-type lysozyme domain occupies 20–141; sequence KQFTKCELSQ…KLDQWLCEKM (122 aa). Disulfide bonds link cysteine 25/cysteine 138, cysteine 47/cysteine 129, cysteine 80/cysteine 95, and cysteine 91/cysteine 109. Ca(2+) contacts are provided by lysine 97, aspartate 100, aspartate 102, aspartate 105, and aspartate 106.

It belongs to the glycosyl hydrolase 22 family. Lactose synthase (LS) is a heterodimer of a catalytic component, beta1,4-galactosyltransferase (beta4Gal-T1) and a regulatory component, alpha-lactalbumin (LA). As to expression, mammary gland specific. Secreted in milk.

It is found in the secreted. Regulatory subunit of lactose synthase, changes the substrate specificity of galactosyltransferase in the mammary gland making glucose a good acceptor substrate for this enzyme. This enables LS to synthesize lactose, the major carbohydrate component of milk. In other tissues, galactosyltransferase transfers galactose onto the N-acetylglucosamine of the oligosaccharide chains in glycoproteins. The protein is Alpha-lactalbumin (LALBA) of Sus scrofa (Pig).